The primary structure comprises 358 residues: Neuronal-specific septin-3 (358 aa).

The span at 1–10 shows a compositional bias: basic and acidic residues; sequence MSKGLPETRT. The segment at 1 to 30 is disordered; the sequence is MSKGLPETRTDAAMSELVPEPRPKPAVPMK. Residues 58 to 331 enclose the Septin-type G domain; sequence TGFDFNIMVV…ETYRAKRLND (274 aa). A G1 motif region spans residues 68–75; the sequence is GQSGLGKS. Position 68–75 (68–75) interacts with GTP; the sequence is GQSGLGKS. Residue S91 is modified to Phosphoserine. T102 provides a ligand contact to GTP. A G3 motif region spans residues 125–128; it reads DTPG. The G4 motif stretch occupies residues 207-210; it reads AKAD. GTP contacts are provided by residues 208 to 216, G265, and R280; that span reads KADTMTLEE.

This sequence belongs to the TRAFAC class TrmE-Era-EngA-EngB-Septin-like GTPase superfamily. Septin GTPase family. Septins polymerize into heterooligomeric protein complexes that form filaments, and can associate with cellular membranes, actin filaments and microtubules. GTPase activity is required for filament formation. Phosphorylated by PKG on serine residues. Phosphorylated by PKG on Ser-91. As to expression, brain-specific.

It is found in the cytoplasm. It localises to the cytoskeleton. The protein localises to the synapse. Its function is as follows. Filament-forming cytoskeletal GTPase. May play a role in cytokinesis (Potential). The chain is Neuronal-specific septin-3 from Homo sapiens (Human).